Consider the following 507-residue polypeptide: Subtilisin-like protease 1 (507 aa).

The first 19 residues, 1–19, serve as a signal peptide directing secretion; it reads MGVFRFISISLAAVSAANA. The propeptide occupies 20–116; that stretch reads AQILSMPHAQ…VEPDTIISVN (97 aa). Residues 34–113 form the Inhibitor I9 domain; it reads SYIVMMKDDT…VMFVEPDTII (80 aa). Positions 126 to 400 constitute a Peptidase S8 domain; the sequence is SWGLARISNS…NVLISNGGAK (275 aa). Active-site charge relay system residues include Asp158 and His190. A disordered region spans residues 175 to 198; that stretch reads GSNQVNDGDDRDGSGHGTHTSGTM. An N-linked (GlcNAc...) asparagine glycan is attached at Asn251. A compositionally biased stretch (polar residues) spans 282–294; the sequence is NENQDARSSSPAS. The tract at residues 282 to 312 is disordered; that stretch reads NENQDARSSSPASEPSVCTVGSSAEDDSRSS. The active-site Charge relay system is Ser345. Polar residues predominate over residues 378–394; the sequence is SSSITDVGPGTPTNVLI. The interval 378 to 486 is disordered; that stretch reads SSSITDVGPG…YPGGDNFDFD (109 aa). Pro residues-rich tracts occupy residues 405–428 and 438–449; these read KPAP…PSQP and EPFPGEPFPGEP. Over residues 450–461 the composition is skewed to low complexity; that stretch reads FPGESSPGESAP. Positions 462-476 are enriched in pro residues; that stretch reads APAPMPPSPQHPHTP.

This sequence belongs to the peptidase S8 family.

Its subcellular location is the secreted. In terms of biological role, secreted subtilisin-like serine protease with keratinolytic activity that contributes to pathogenicity. This chain is Subtilisin-like protease 1 (SUB1), found in Trichophyton equinum (Horse ringworm fungus).